The sequence spans 251 residues: Hydroxyacylglutathione hydrolase (251 aa).

Zn(2+) contacts are provided by His53, His55, Asp57, His58, His110, Asp127, and His165.

It belongs to the metallo-beta-lactamase superfamily. Glyoxalase II family. Monomer. It depends on Zn(2+) as a cofactor.

The catalysed reaction is an S-(2-hydroxyacyl)glutathione + H2O = a 2-hydroxy carboxylate + glutathione + H(+). It functions in the pathway secondary metabolite metabolism; methylglyoxal degradation; (R)-lactate from methylglyoxal: step 2/2. Its function is as follows. Thiolesterase that catalyzes the hydrolysis of S-D-lactoyl-glutathione to form glutathione and D-lactic acid. The sequence is that of Hydroxyacylglutathione hydrolase from Escherichia fergusonii (strain ATCC 35469 / DSM 13698 / CCUG 18766 / IAM 14443 / JCM 21226 / LMG 7866 / NBRC 102419 / NCTC 12128 / CDC 0568-73).